Here is an 89-residue protein sequence, read N- to C-terminus: Small ribosomal subunit protein uS14 (89 aa).

The protein belongs to the universal ribosomal protein uS14 family. Part of the 30S ribosomal subunit. Contacts proteins S3 and S10.

Functionally, binds 16S rRNA, required for the assembly of 30S particles and may also be responsible for determining the conformation of the 16S rRNA at the A site. This is Small ribosomal subunit protein uS14 from Chlorobaculum parvum (strain DSM 263 / NCIMB 8327) (Chlorobium vibrioforme subsp. thiosulfatophilum).